The primary structure comprises 358 residues: Diels-Alderase phmD (358 aa).

This sequence belongs to the Diels-Alderase family.

Its pathway is mycotoxin biosynthesis. Its function is as follows. Diels-Alderase; part of the gene cluster that mediates the biosynthesis of the mycotoxins phomacins, leucine-derived cytochalasans with potent actin polymerization-inhibitory activities and monocot-specific antigerminative activities. The first step in the pathway is catalyzed by the hybrid PKS-NRPS phmA, assisted by the enoyl reductase phmE, that are responsible for fusion of the leucine precursor and the polyketide backbone to produce a 2-pyrrolidone intermediate. The polyketide synthase module (PKS) of phmA is responsible for the synthesis of the polyketide backbone and the downstream nonribosomal peptide synthetase (NRPS) amidates the carboxyl end of the polyketide with the leucine precursor. Because phmA lacks a designated enoylreductase (ER) domain, the required activity is provided the enoyl reductase phmE. Reduction by the hydrolyase phmG, followed by dehydration and intra-molecular Diels-Alder cyclization by the Diels-Alderase phmD then yield the required isoindolone-fused macrocycle. A number of oxidative steps catalyzed by the tailoring cytochrome P450 monooxygenase phmB, the FAD-linked oxidoreductase phmC and the short-chain dehydrogenase/reductase phmF, are further required to afford the final products, phomacin D and phomacin E. The sequence is that of Diels-Alderase phmD from Phaeosphaeria nodorum (strain SN15 / ATCC MYA-4574 / FGSC 10173) (Glume blotch fungus).